The following is a 311-amino-acid chain: Solute carrier family 25 member 48 (311 aa).

Solcar repeat units lie at residues 3–86, 100–205, and 214–301; these read NFQL…TQRF, PHVL…LSDW, and PSPC…SLQA. Helical transmembrane passes span 9–29, 61–81, 107–127, 193–213, 217–237, and 277–295; these read FVAGWIGGAASVIVGHPLDTV, GMSFPLASIAVYNSVVFGVFS, LLASMVAGVVSVGLGAPVDLI, CLYFIPYVFLSDWITPEACAG, CAVWLAGGMAGAISWGTATPM, and ITVNAVRGFPMSAAMFLGY.

Belongs to the mitochondrial carrier (TC 2.A.29) family.

The protein localises to the mitochondrion inner membrane. In Bos taurus (Bovine), this protein is Solute carrier family 25 member 48 (SLC25A48).